Reading from the N-terminus, the 274-residue chain is Large ribosomal subunit protein uL2 (274 aa).

Positions 224–259 are disordered; the sequence is AMNPVDHPHGGGEGRTSGGRHPVTPWGIPTKGYKTR.

This sequence belongs to the universal ribosomal protein uL2 family. As to quaternary structure, part of the 50S ribosomal subunit. Forms a bridge to the 30S subunit in the 70S ribosome.

In terms of biological role, one of the primary rRNA binding proteins. Required for association of the 30S and 50S subunits to form the 70S ribosome, for tRNA binding and peptide bond formation. It has been suggested to have peptidyltransferase activity; this is somewhat controversial. Makes several contacts with the 16S rRNA in the 70S ribosome. This is Large ribosomal subunit protein uL2 from Geobacter sp. (strain M21).